The following is a 188-amino-acid chain: Elongation factor P (188 aa).

The protein belongs to the elongation factor P family.

The protein localises to the cytoplasm. The protein operates within protein biosynthesis; polypeptide chain elongation. Involved in peptide bond synthesis. Stimulates efficient translation and peptide-bond synthesis on native or reconstituted 70S ribosomes in vitro. Probably functions indirectly by altering the affinity of the ribosome for aminoacyl-tRNA, thus increasing their reactivity as acceptors for peptidyl transferase. The sequence is that of Elongation factor P from Wolbachia sp. subsp. Drosophila simulans (strain wRi).